A 307-amino-acid polypeptide reads, in one-letter code: Elongation factor Ts (307 aa).

The involved in Mg(2+) ion dislocation from EF-Tu stretch occupies residues T79–V82.

The protein belongs to the EF-Ts family.

It is found in the cytoplasm. In terms of biological role, associates with the EF-Tu.GDP complex and induces the exchange of GDP to GTP. It remains bound to the aminoacyl-tRNA.EF-Tu.GTP complex up to the GTP hydrolysis stage on the ribosome. This Sinorhizobium medicae (strain WSM419) (Ensifer medicae) protein is Elongation factor Ts.